Consider the following 155-residue polypeptide: uncharacterized protein (155 aa).

Helical transmembrane passes span 4–24 (IVGA…AGYL), 46–66 (AIGI…AIVY), 77–97 (FWFT…FQFT), 101–121 (LLAA…LLII), and 130–150 (SYLL…SFTI).

The protein belongs to the TspO/BZRP family.

It localises to the cell membrane. This is an uncharacterized protein from Bacillus subtilis (strain 168).